The chain runs to 481 residues: 2-methylisoborneol synthase (481 aa).

2 disordered regions span residues 1 to 125 (MPDS…PVGP) and 139 to 160 (QAAV…GPVV). Residues 11–23 (TSLPEQPPAPPAT) are compositionally biased toward pro residues. Positions 24–33 (APDAPAATVT) are enriched in low complexity. 2 stretches are compositionally biased toward pro residues: residues 52-64 (VTRP…PSMP) and 71-104 (SSPP…PPAT). The span at 105 to 114 (APETSAATGS) shows a compositional bias: low complexity. Residues Asp-238, Asp-239, Glu-243, Asn-386, Ser-390, and Glu-394 each coordinate Mg(2+).

Belongs to the terpene synthase family. 2-methylisoborneol synthase subfamily. It depends on Mg(2+) as a cofactor.

It catalyses the reaction (E)-2-methylgeranyl diphosphate + H2O = 2-methylisoborneol + diphosphate. Catalyzes the cyclization of 2-methylgeranyl diphosphate (2-MeGPP) to 2-methylisoborneol (2-MIB), which likely involves the intermediacy of 2-methyllinalyl diphosphate. The sequence is that of 2-methylisoborneol synthase (tpc) from Streptomyces lasalocidi (Streptomyces lasaliensis).